The primary structure comprises 622 residues: UvrABC system protein C (622 aa).

A GIY-YIG domain is found at 12 to 91; that stretch reads SSPGVYIMKD…IKKYRPKYNF (80 aa). The UVR domain occupies 201–236; sequence REILKIFRERMSAAAAAEKYEKAARFRDLIRSIEVT.

It belongs to the UvrC family. As to quaternary structure, interacts with UvrB in an incision complex.

The protein localises to the cytoplasm. Its function is as follows. The UvrABC repair system catalyzes the recognition and processing of DNA lesions. UvrC both incises the 5' and 3' sides of the lesion. The N-terminal half is responsible for the 3' incision and the C-terminal half is responsible for the 5' incision. The sequence is that of UvrABC system protein C from Geotalea daltonii (strain DSM 22248 / JCM 15807 / FRC-32) (Geobacter daltonii).